The primary structure comprises 307 residues: Nitric oxide synthase-interacting protein homolog (307 aa).

Positions 120 to 159 (PAMTPAHSSAAASEKPSTSSAAAAASSESSSASSISNMTN) are disordered. Low complexity predominate over residues 127–155 (SSAAASEKPSTSSAAAAASSESSSASSIS).

The protein belongs to the NOSIP family.

It localises to the cytoplasm. Its subcellular location is the nucleus. Negatively regulates nitric oxide production by inducing nitric oxide synthase translocation to actin cytoskeleton and inhibiting its enzymatic activity. The polypeptide is Nitric oxide synthase-interacting protein homolog (Drosophila melanogaster (Fruit fly)).